A 240-amino-acid polypeptide reads, in one-letter code: RxLR effector protein PexRD20 (240 aa).

Residues 1–23 (MRCHYFVLLAVAAFLAGANVAVA) form the signal peptide. Residues 43-58 (RALRSHTKATDHGEER) carry the RxLR-dEER motif.

This sequence belongs to the RxLR effector family.

It localises to the secreted. Its subcellular location is the host cytoplasm. It is found in the host nucleus. The protein localises to the host nucleolus. Its function is as follows. Effector that enhances P.infestans colonization of Nicotiana benthamiana leaves. The polypeptide is RxLR effector protein PexRD20 (Phytophthora infestans (strain T30-4) (Potato late blight agent)).